Here is a 976-residue protein sequence, read N- to C-terminus: Vacuolar membrane protease (976 aa).

The Cytoplasmic segment spans residues 1 to 15 (MKLKSVFRSVLKYRK). A helical transmembrane segment spans residues 16 to 36 (TNLSLLLLITYSIITLLYIFD). Residues 37–359 (HERYKLNLPK…KFFVISAKTL (323 aa)) are Vacuolar-facing. N-linked (GlcNAc...) asparagine glycosylation is found at N96 and N121. Residues H156 and D168 each contribute to the Zn(2+) site. N189 carries N-linked (GlcNAc...) asparagine glycosylation. E200 serves as the catalytic Proton acceptor. A Zn(2+)-binding site is contributed by E201. N212 and N217 each carry an N-linked (GlcNAc...) asparagine glycan. The Zn(2+) site is built by E226 and H300. Residues 360-380 (FYWNCIFLLVSPVVAIGLYLI) form a helical membrane-spanning segment. Over 381–392 (SRDRMTWKSHSW) the chain is Cytoplasmic. Residues 393–412 (LSWTRFPLSLAAGIIVQKLF) form a helical membrane-spanning segment. Topologically, residues 413-428 (SNDIIRSNPLTFSRNY) are vacuolar. Residues 429–449 (FWPISAFFTQVIFTSYVLINC) traverse the membrane as a helical segment. Residues 450–461 (SNFFFPCADMKS) lie on the Cytoplasmic side of the membrane. A helical membrane pass occupies residues 462–482 (LSIIELFIILWTILLFTSKLL). Topologically, residues 483 to 496 (YSSDYRYTGLYPLS) are vacuolar. Residues 497 to 517 (IFFLLSTIAAILRLLALALGM) traverse the membrane as a helical segment. The Cytoplasmic segment spans residues 518–627 (RTRKRLGREC…NSLKLEYTDY (110 aa)). Residues 528-610 (RDHHSNYSSH…PLLKGSNSME (83 aa)) are disordered. Residues 549–558 (NLEQPQDQFT) are compositionally biased toward polar residues. A compositionally biased stretch (low complexity) spans 559 to 570 (SSQDDQASIQDD). Residues 582 to 601 (NVDEDHGMDSSSQQHDERVP) show a composition bias toward basic and acidic residues. The chain crosses the membrane as a helical span at residues 628–648 (AWIIQFLLIVPIPSFILFNSV). The Vacuolar portion of the chain corresponds to 649-668 (DVIMDALNHTVQEGSKATFD). An N-linked (GlcNAc...) asparagine glycan is attached at N656. A helical transmembrane segment spans residues 669-689 (VLRFGMVGSILMALPILPFFY). Residues 690–692 (KVN) lie on the Cytoplasmic side of the membrane. Residues 693-713 (YITISLTALLFLISASKTLLV) traverse the membrane as a helical segment. Residues 714 to 976 (HPFTNSNPLK…LVIVKDAIIL (263 aa)) lie on the Vacuolar side of the membrane. Residues N768, N796, N811, N866, and N937 are each glycosylated (N-linked (GlcNAc...) asparagine).

The protein belongs to the peptidase M28 family. Zn(2+) is required as a cofactor.

The protein resides in the vacuole membrane. Functionally, may be involved in vacuolar sorting and osmoregulation. This Saccharomyces cerevisiae (strain AWRI1631) (Baker's yeast) protein is Vacuolar membrane protease.